The sequence spans 234 residues: Enterobactin synthase component D (234 aa).

3 residues coordinate Mg(2+): aspartate 107, glutamate 109, and glutamate 152.

The protein belongs to the P-Pant transferase superfamily. EntD family. As to quaternary structure, entB, EntD, EntE, and EntF form a multienzyme complex called enterobactin synthase. Mg(2+) serves as cofactor.

It is found in the membrane. The enzyme catalyses apo-[aryl-carrier protein] + CoA = holo-[aryl-carrier protein] + adenosine 3',5'-bisphosphate + H(+). The catalysed reaction is apo-[peptidyl-carrier protein] + CoA = holo-[peptidyl-carrier protein] + adenosine 3',5'-bisphosphate + H(+). The protein operates within siderophore biosynthesis; enterobactin biosynthesis. Functionally, involved in the biosynthesis of the siderophore enterobactin (enterochelin), which is a macrocyclic trimeric lactone of N-(2,3-dihydroxybenzoyl)-serine. The serine trilactone serves as a scaffolding for the three catechol functionalities that provide hexadentate coordination for the tightly ligated iron(2+) atoms. Plays an essential role in the assembly of the enterobactin by catalyzing the transfer of the 4'-phosphopantetheine (Ppant) moiety from coenzyme A to the apo-domains of both EntB (ArCP domain) and EntF (PCP domain) to yield their holo-forms which make them competent for the activation of 2,3-dihydroxybenzoate (DHB) and L-serine, respectively. The chain is Enterobactin synthase component D from Salmonella typhi.